The following is a 379-amino-acid chain: MKYSTIFSAAAAVFAGSAAAVGVSGSAEGFAEGVTGGGDATPVYPDTIDELVSYLGDDEARVIVLTKTFDFTDSEGTTTGTGCAPWGTASACQVAIDQDDWCENYEPDAPSVSVEYYNAGVLGITVTSNKSLIGEGSSGAIKGKGLRIVSGAENIIIQNIAVTDINPKYVWGGDAITLDDCDLVWIDHVTTARIGRQHYVLGTSADNRVSLTNNYIDGVSDYSATCDGYHYWGIYLDGDADLVTMKGNYIYHTSGRSPKVQDNTLLHCVNNYFYDISGHAFEIGEGGYVLAEGNVFQNVDTVLETYEGAAFTVPSTTAGEVCSTYLGRDCVINGFGCSGTFSEDSTSFLSDFEGKNIASASAYTSVASRVVANAGQGNL.

Residues 1-20 (MKYSTIFSAAAAVFAGSAAA) form the signal peptide. Intrachain disulfides connect C83/C102 and C92/C226. An O-linked (Man) threonine glycan is attached at T88. Residue N129 is glycosylated (N-linked (GlcNAc...) asparagine). R256 is an active-site residue. Residues C322 and C330 are joined by a disulfide bond. S368 is a glycosylation site (O-linked (Man) serine; in strain 4M-147).

This sequence belongs to the polysaccharide lyase 1 family. N-glycosylated at Asn-129 and O-glycosylated at Thr-88 when expressed in Aspergillus nidulans. The protein from strain 4M-147 is O-glycosylated at Thr-88 and Ser-368. PubMed:9195887 modeled GalNAc at the O-glycosylation site, a glycosylation not observed in fungi. The O-linked saccharide is probably mannose.

The protein localises to the secreted. The catalysed reaction is Eliminative cleavage of (1-&gt;4)-alpha-D-galacturonan methyl ester to give oligosaccharides with 4-deoxy-6-O-methyl-alpha-D-galact-4-enuronosyl groups at their non-reducing ends.. Pectinolytic enzymes consist of four classes of enzymes: pectin lyase, polygalacturonase, pectin methylesterase and rhamnogalacturonase. Among pectinolytic enzymes, pectin lyase is the most important in depolymerization of pectin, since it cleaves internal glycosidic bonds of highly methylated pectins. The sequence is that of Pectin lyase A (pelA) from Aspergillus niger.